The chain runs to 225 residues: 2-C-methyl-D-erythritol 4-phosphate cytidylyltransferase (225 aa).

Belongs to the IspD/TarI cytidylyltransferase family. IspD subfamily.

The catalysed reaction is 2-C-methyl-D-erythritol 4-phosphate + CTP + H(+) = 4-CDP-2-C-methyl-D-erythritol + diphosphate. The protein operates within isoprenoid biosynthesis; isopentenyl diphosphate biosynthesis via DXP pathway; isopentenyl diphosphate from 1-deoxy-D-xylulose 5-phosphate: step 2/6. Catalyzes the formation of 4-diphosphocytidyl-2-C-methyl-D-erythritol from CTP and 2-C-methyl-D-erythritol 4-phosphate (MEP). This Cereibacter sphaeroides (strain KD131 / KCTC 12085) (Rhodobacter sphaeroides) protein is 2-C-methyl-D-erythritol 4-phosphate cytidylyltransferase.